Consider the following 355-residue polypeptide: Protein RecA (355 aa).

72–79 is an ATP binding site; the sequence is GPESSGKT.

It belongs to the RecA family.

The protein localises to the cytoplasm. In terms of biological role, can catalyze the hydrolysis of ATP in the presence of single-stranded DNA, the ATP-dependent uptake of single-stranded DNA by duplex DNA, and the ATP-dependent hybridization of homologous single-stranded DNAs. It interacts with LexA causing its activation and leading to its autocatalytic cleavage. In Thermosynechococcus vestitus (strain NIES-2133 / IAM M-273 / BP-1), this protein is Protein RecA.